A 353-amino-acid chain; its full sequence is Photosystem II D2 protein (353 aa).

The residue at position 2 (T2) is an N-acetylthreonine. T2 is subject to Phosphothreonine. The helical transmembrane segment at 41–61 (CAYFALGGWFTGTTFVTSWYT) threads the bilayer. H118 lines the chlorophyll a pocket. The helical transmembrane segment at 125–141 (GFMLRQFELARSVQLRP) threads the bilayer. Pheophytin a is bound by residues Q130 and N143. The chain crosses the membrane as a helical span at residues 153–166 (VFVSVFLIYPLGQS). Residue H198 coordinates chlorophyll a. Residues 208–228 (AALLCAIHGATVENTLFEDGD) form a helical membrane-spanning segment. The a plastoquinone site is built by H215 and F262. A Fe cation-binding site is contributed by H215. Residue H269 coordinates Fe cation. Residues 279 to 295 (GLWMSALGVVGLALNLR) traverse the membrane as a helical segment.

This sequence belongs to the reaction center PufL/M/PsbA/D family. In terms of assembly, PSII is composed of 1 copy each of membrane proteins PsbA, PsbB, PsbC, PsbD, PsbE, PsbF, PsbH, PsbI, PsbJ, PsbK, PsbL, PsbM, PsbT, PsbX, PsbY, PsbZ, Psb30/Ycf12, at least 3 peripheral proteins of the oxygen-evolving complex and a large number of cofactors. It forms dimeric complexes. The D1/D2 heterodimer binds P680, chlorophylls that are the primary electron donor of PSII, and subsequent electron acceptors. It shares a non-heme iron and each subunit binds pheophytin, quinone, additional chlorophylls, carotenoids and lipids. There is also a Cl(-1) ion associated with D1 and D2, which is required for oxygen evolution. The PSII complex binds additional chlorophylls, carotenoids and specific lipids. serves as cofactor.

Its subcellular location is the plastid. The protein resides in the chloroplast thylakoid membrane. The catalysed reaction is 2 a plastoquinone + 4 hnu + 2 H2O = 2 a plastoquinol + O2. Functionally, photosystem II (PSII) is a light-driven water:plastoquinone oxidoreductase that uses light energy to abstract electrons from H(2)O, generating O(2) and a proton gradient subsequently used for ATP formation. It consists of a core antenna complex that captures photons, and an electron transfer chain that converts photonic excitation into a charge separation. The D1/D2 (PsbA/PsbD) reaction center heterodimer binds P680, the primary electron donor of PSII as well as several subsequent electron acceptors. D2 is needed for assembly of a stable PSII complex. This is Photosystem II D2 protein from Chloranthus spicatus (Chulantree).